A 376-amino-acid polypeptide reads, in one-letter code: Protein-tyrosine sulfotransferase 2 (376 aa).

Residues 1–8 lie on the Cytoplasmic side of the membrane; it reads MRLSVRKV. A helical; Signal-anchor for type II membrane protein membrane pass occupies residues 9-25; that stretch reads LLAAGCALALVLAVQLG. The Lumenal portion of the chain corresponds to 26–376; that stretch reads QQVLECRAVL…NSTSPHLGSS (351 aa). Position 77–81 (77–81) interacts with 3'-phosphoadenylyl sulfate; the sequence is RSGTT. A disulfide bridge links Cys-95 with Cys-155. Glu-98 acts as the Proton donor/acceptor in catalysis. The tract at residues 100–104 is interaction with peptide substrate; that stretch reads RIIPR. Positions 182, 190, and 194 each coordinate 3'-phosphoadenylyl sulfate. Cys-224 and Cys-232 are disulfide-bonded. Residues Tyr-237, 284–293, and Lys-299 contribute to the 3'-phosphoadenylyl sulfate site; that span reads STDQVIKPVN. N-linked (GlcNAc...) asparagine glycans are attached at residues Asn-342 and Asn-367.

Belongs to the protein sulfotransferase family. As to quaternary structure, homodimer. Can also form heterodimers with TPST1. N-glycosylated. As to expression, widely expressed.

It localises to the golgi apparatus membrane. The catalysed reaction is L-tyrosyl-[protein] + 3'-phosphoadenylyl sulfate = O-sulfo-L-tyrosine-[protein] + adenosine 3',5'-bisphosphate + H(+). Its function is as follows. Catalyzes the O-sulfation of tyrosine residues within acidic motifs of polypeptides, using 3'-phosphoadenylyl sulfate (PAPS) as cosubstrate. This Mus musculus (Mouse) protein is Protein-tyrosine sulfotransferase 2 (Tpst2).